Reading from the N-terminus, the 379-residue chain is Homoserine O-succinyltransferase (379 aa).

Residues 51–360 (NAVLICHALS…DAPQGHDAFL (310 aa)) form the AB hydrolase-1 domain. Catalysis depends on Ser-157, which acts as the Nucleophile. Arg-227 serves as a coordination point for substrate. Residues Asp-323 and His-356 contribute to the active site. Asp-357 contributes to the substrate binding site.

Belongs to the AB hydrolase superfamily. MetX family. Homodimer.

The protein localises to the cytoplasm. It catalyses the reaction L-homoserine + succinyl-CoA = O-succinyl-L-homoserine + CoA. It functions in the pathway amino-acid biosynthesis; L-methionine biosynthesis via de novo pathway; O-succinyl-L-homoserine from L-homoserine: step 1/1. Functionally, transfers a succinyl group from succinyl-CoA to L-homoserine, forming succinyl-L-homoserine. This is Homoserine O-succinyltransferase from Pseudomonas aeruginosa (strain UCBPP-PA14).